The primary structure comprises 105 residues: UPF0235 protein RrIowa_1526 (105 aa).

Belongs to the UPF0235 family.

The chain is UPF0235 protein RrIowa_1526 from Rickettsia rickettsii (strain Iowa).